Here is a 150-residue protein sequence, read N- to C-terminus: Small ribosomal subunit protein bS6 (150 aa).

The tract at residues K92–K150 is disordered. Residues A98–V109 are compositionally biased toward basic residues. Positions F113–R129 are enriched in basic and acidic residues. Positions T132–S141 are enriched in low complexity.

It belongs to the bacterial ribosomal protein bS6 family.

Functionally, binds together with bS18 to 16S ribosomal RNA. The protein is Small ribosomal subunit protein bS6 of Mycoplasmopsis pulmonis (strain UAB CTIP) (Mycoplasma pulmonis).